Reading from the N-terminus, the 381-residue chain is uncharacterized protein (381 aa).

2 consecutive transmembrane segments (helical) span residues 22-42 (GVLLTLAAVAVVASIGTYLTA) and 246-266 (LIPENVHWTIWQLWLVVLLVA).

The protein resides in the cell membrane. This is an uncharacterized protein from Mycobacterium tuberculosis (strain ATCC 25618 / H37Rv).